A 360-amino-acid chain; its full sequence is Inward rectifier potassium channel 13 (360 aa).

Residues 1–50 (MDSSNCKVNAPLLSQRHRRMVTKDGHSTLQMDGAQRGLVYLRDAWGILMD) lie on the Cytoplasmic side of the membrane. Residues 51 to 77 (MRWRWMMLVFSASFVVHWLVFAVLWYA) form a helical membrane-spanning segment. Topologically, residues 78–105 (VAEMNGDLEIDHDVPPENHTICVKHITS) are extracellular. Positions 106–122 (FTAAFSFSLETQLTIGY) form an intramembrane region, helical; Pore-forming. A Selectivity filter motif is present at residues 119-124 (TIGYGT). Residues 123–131 (GTMFPSGDC) are Extracellular-facing. Residues 132–157 (PSAIALLAIQMLLGLMLEAFITGAFV) traverse the membrane as a helical segment. Topologically, residues 158–360 (AKIARPKNRA…FQIAETGLTE (203 aa)) are cytoplasmic. Position 287 is a phosphoserine; by PKA (Ser-287).

The protein belongs to the inward rectifier-type potassium channel (TC 1.A.2.1) family. KCNJ13 subfamily. Homotetramer. Interacts with RAB28; the interaction may facilitate cone outer segments phagocytosis. Phosphorylation at Ser-287 by PKA increases ionic currents. As to expression, expressed in retina.

It is found in the membrane. The protein localises to the cell membrane. The catalysed reaction is K(+)(in) = K(+)(out). Inhibited by Ba(2+) and Cs(+), although sensitivity to those inhibitors is much lower than in other Kir channels. Inward rectifier potassium channels are characterized by a greater tendency to allow potassium to flow into the cell rather than out of it. Their voltage dependence is regulated by the concentration of extracellular potassium; as external potassium is raised, the voltage range of the channel opening shifts to more positive voltages. The inward rectification is mainly due to the blockage of outward current by internal magnesium. KCNJ13 has a very low single channel conductance, low sensitivity to block by external barium and cesium, and no dependence of its inward rectification properties on the internal blocking particle magnesium. This Mus musculus (Mouse) protein is Inward rectifier potassium channel 13.